The following is a 478-amino-acid chain: Proline--tRNA ligase (478 aa).

It belongs to the class-II aminoacyl-tRNA synthetase family. ProS type 3 subfamily. As to quaternary structure, homodimer.

The protein resides in the cytoplasm. It catalyses the reaction tRNA(Pro) + L-proline + ATP = L-prolyl-tRNA(Pro) + AMP + diphosphate. Catalyzes the attachment of proline to tRNA(Pro) in a two-step reaction: proline is first activated by ATP to form Pro-AMP and then transferred to the acceptor end of tRNA(Pro). The sequence is that of Proline--tRNA ligase from Ignicoccus hospitalis (strain KIN4/I / DSM 18386 / JCM 14125).